Consider the following 142-residue polypeptide: Small ribosomal subunit protein uS12 (142 aa).

Residues 1-44 (MANGKYAARKLKQDRQKHRWSDSDYARRARGLGKKSDPLEGAPQ) are disordered. A compositionally biased stretch (basic and acidic residues) spans 11–27 (LKQDRQKHRWSDSDYAR).

Belongs to the universal ribosomal protein uS12 family. Part of the 30S ribosomal subunit.

Functionally, with S4 and S5 plays an important role in translational accuracy. Located at the interface of the 30S and 50S subunits. In Natronomonas pharaonis (strain ATCC 35678 / DSM 2160 / CIP 103997 / JCM 8858 / NBRC 14720 / NCIMB 2260 / Gabara) (Halobacterium pharaonis), this protein is Small ribosomal subunit protein uS12.